Reading from the N-terminus, the 150-residue chain is Retinal rod rhodopsin-sensitive cGMP 3',5'-cyclic phosphodiesterase subunit delta (150 aa).

The tract at residues 144–150 (RVRLFYV) is required for association with membranes.

The protein belongs to the PDE6D/unc-119 family. As to quaternary structure, interacts with the prenylated catalytic subunits of PDE6, an oligomer composed of two catalytic chains (PDE6A and PDE6B) and two inhibitory chains (gamma); has no effect on enzyme activity but promotes the release of the prenylated enzyme from cell membrane. Interacts with prenylated GRK1 and GRK7. Interacts with prenylated Ras family members, including RAP2A and RAP2C. Interacts with prenylated RHEB and NRAS. Interacts with prenylated HRAS and KRAS. Interacts with RAB13 (prenylated form); dissociates RAB13 from membranes. Interacts with prenylated INPP5E. Interacts with RAB28 (prenylated form); the interaction promotes RAB28 delivery to the photoreceptor outer segments. Interacts with RPGR. Interacts with ARL2. Interacts with ARL3; the interaction occurs specifically with the GTP-bound form of ARL3. Interaction with ARL2 and ARL3 promotes release of farnesylated cargo proteins. As to expression, widely expressed. Detected in various tissues including spleen, prostate gland, testis, ovary, small intestine, colon, retina, and peripheral blood.

Its subcellular location is the cytoplasm. It localises to the cytosol. The protein resides in the cytoplasmic vesicle membrane. It is found in the cytoskeleton. The protein localises to the cilium basal body. Promotes the release of prenylated target proteins from cellular membranes. Modulates the activity of prenylated or palmitoylated Ras family members by regulating their subcellular location. Required for normal ciliary targeting of farnesylated target proteins, such as INPP5E. Required for RAB28 localization to the cone cell outer segments in the retina. Modulates the subcellular location of target proteins by acting as a GTP specific dissociation inhibitor (GDI). Increases the affinity of ARL3 for GTP by several orders of magnitude. Stabilizes ARL3-GTP by decreasing the nucleotide dissociation rate. In Homo sapiens (Human), this protein is Retinal rod rhodopsin-sensitive cGMP 3',5'-cyclic phosphodiesterase subunit delta (PDE6D).